The sequence spans 535 residues: ABC1 family protein C10F6.14c (535 aa).

This sequence belongs to the protein kinase superfamily. ADCK protein kinase family.

The sequence is that of ABC1 family protein C10F6.14c from Schizosaccharomyces pombe (strain 972 / ATCC 24843) (Fission yeast).